Here is a 475-residue protein sequence, read N- to C-terminus: Sulfate adenylyltransferase subunit 1 (475 aa).

Residues 25–239 form the tr-type G domain; the sequence is KSLLRFLTCG…EVLETVEIQR (215 aa). The segment at 34–41 is G1; sequence GSVDDGKS. 34–41 contacts GTP; that stretch reads GSVDDGKS. The interval 92–96 is G2; that stretch reads GITID. The G3 stretch occupies residues 113-116; it reads DTPG. GTP-binding positions include 113–117 and 168–171; these read DTPGH and NKMD. A G4 region spans residues 168–171; that stretch reads NKMD. The segment at 206-208 is G5; sequence SAL.

This sequence belongs to the TRAFAC class translation factor GTPase superfamily. Classic translation factor GTPase family. CysN/NodQ subfamily. In terms of assembly, heterodimer composed of CysD, the smaller subunit, and CysN.

The enzyme catalyses sulfate + ATP + H(+) = adenosine 5'-phosphosulfate + diphosphate. It functions in the pathway sulfur metabolism; hydrogen sulfide biosynthesis; sulfite from sulfate: step 1/3. Its function is as follows. With CysD forms the ATP sulfurylase (ATPS) that catalyzes the adenylation of sulfate producing adenosine 5'-phosphosulfate (APS) and diphosphate, the first enzymatic step in sulfur assimilation pathway. APS synthesis involves the formation of a high-energy phosphoric-sulfuric acid anhydride bond driven by GTP hydrolysis by CysN coupled to ATP hydrolysis by CysD. This is Sulfate adenylyltransferase subunit 1 from Shigella boydii serotype 18 (strain CDC 3083-94 / BS512).